We begin with the raw amino-acid sequence, 499 residues long: MFGDLASPFVLVLGLGESGLAMARWCARHGARARVADTREAPANLPALRAHVPDAEFIGGPFAPSLLEGVALVAISPGLSPLDAAVAALLDGARERAVPVWGEIELFARALAGLKLAQGYAPRVLAITGTNGKTTTTALAGALVQRAGKTVGVAGNISPSALDKLTECVDAGTLPDVWVLELSSFQLETTHTLDADAATILNITQDHLDWHGSMAAYAAAKGRIFGAGTVRVLNRQDADVMAFAGKRGGDVTFGTDEPATPEALGLLRDGGIPWIVLAEADDDDLPKPARRKKGDTTPAAPVPVRLKRLMPADALRIRGLHNATNAMAALALCRAIGLPASALLHGLRDYAGEPHRVELIAAFDDIEFFDDSKGTNVGATVAALSGLSKRVVLIAGGDGKGQDFSPLAAPVAQYARAVVLIGRDAPRIRAALADSGVELVEAATLEAAVQEAAARAQAGDAVLLSPACASFDMFRNYEHRAQVFHEAVAALAADRGVML.

129–135 (GTNGKTT) serves as a coordination point for ATP.

The protein belongs to the MurCDEF family.

It localises to the cytoplasm. The catalysed reaction is UDP-N-acetyl-alpha-D-muramoyl-L-alanine + D-glutamate + ATP = UDP-N-acetyl-alpha-D-muramoyl-L-alanyl-D-glutamate + ADP + phosphate + H(+). Its pathway is cell wall biogenesis; peptidoglycan biosynthesis. Cell wall formation. Catalyzes the addition of glutamate to the nucleotide precursor UDP-N-acetylmuramoyl-L-alanine (UMA). The polypeptide is UDP-N-acetylmuramoylalanine--D-glutamate ligase (Ralstonia nicotianae (strain ATCC BAA-1114 / GMI1000) (Ralstonia solanacearum)).